Consider the following 390-residue polypeptide: MAAAILLRRVPPARAQATALIAARSISDSTAPLTIETSVPFTSHIVDPPSRDVTTTPAELLTFFRDMSVMRRMEIAADSLYKAKLIRGFCHLYDGQEAVAVGMEAAITRSDSIITAYRDHCTYLARGGDLVSAFAELMGRQAGCSRGKGGSMHFYKKDANFYGGHGIVGAQVPLGCGLAFAQKYRKEETATFALYGDGAANQGQLFEALNISALWKLPAILVCENNHYGMGTAEWRAAKSPAYYKRGDYVPGLKVDGMDVLAVKQACKFAKEHAIANGPIVLEMDTYRYHGHSMSDPGSTYRTRDEISGVRQERDPIERVRKLILAHDLATAAELKDMEKEIRKEVDDAIAKAKESPMPDTSELFTNVYVKGFGVESFGADRKELRATLP.

The transit peptide at 1–15 (MAAAILLRRVPPARA) directs the protein to the mitochondrion. Pyruvate-binding residues include H91, Y117, R118, G166, V168, D197, G198, A199, N226, and Y228. Thiamine diphosphate-binding residues include Y117, R118, G166, V168, D197, G198, A199, and N226. Residue D197 participates in Mg(2+) binding. Mg(2+) is bound by residues N226 and Y228. H292 is a thiamine diphosphate binding site. Residues 293-312 (SMSDPGSTYRTRDEISGVRQ) are disordered. The segment covering 302–312 (RTRDEISGVRQ) has biased composition (basic and acidic residues).

As to quaternary structure, tetramer of 2 alpha and 2 beta subunits. The cofactor is thiamine diphosphate. Mg(2+) is required as a cofactor.

Its subcellular location is the mitochondrion matrix. It carries out the reaction N(6)-[(R)-lipoyl]-L-lysyl-[protein] + pyruvate + H(+) = N(6)-[(R)-S(8)-acetyldihydrolipoyl]-L-lysyl-[protein] + CO2. Its function is as follows. The pyruvate dehydrogenase complex catalyzes the overall conversion of pyruvate to acetyl-CoA and CO(2). It contains multiple copies of three enzymatic components: pyruvate dehydrogenase (E1), dihydrolipoamide acetyltransferase (E2) and lipoamide dehydrogenase (E3). This chain is Pyruvate dehydrogenase E1 component subunit alpha-1, mitochondrial, found in Oryza sativa subsp. japonica (Rice).